The primary structure comprises 271 residues: Collectin-11 (271 aa).

An N-terminal signal peptide occupies residues 1–25 (MVGEKLVAYMLVSVLGLALLRSVFG). The Collagen-like domain maps to 44–103 (GEAGEKGEKGAPGRPGRVGPTGEQGPPGDKGQKGSPGRYGKMGPTGPKGLKGDMGDPGPK). A disordered region spans residues 46–112 (AGEKGEKGAP…KGPNGEPGVP (67 aa)). Residues 124-148 (EMDIQVVQLTNELKFIKNAVAGIKE) adopt a coiled-coil conformation. The C-type lectin domain maps to 149–265 (TDSKVYLLVK…CQLTMYFVCE (117 aa)). Cystine bridges form between Cys170/Cys264 and Cys242/Cys256. Residue Arg200 coordinates a carbohydrate. The Ca(2+) site is built by Asp207, Glu211, Glu232, Asn234, Asn235, Asp238, Glu240, and Asp241. Position 240 (Glu240) interacts with a carbohydrate. Residues Glu244 and 252 to 254 (IDV) each bind a carbohydrate. Asp253 contributes to the Ca(2+) binding site.

The protein belongs to the COLEC10/COLEC11 family. As to quaternary structure, homotrimer; disulfide-linked. Interacts with MASP1; probably triggers the lectin pathway of complement.

It localises to the secreted. Lectin that plays a role in innate immunity, apoptosis and embryogenesis. Calcium-dependent lectin that binds self and non-self glycoproteins presenting high mannose oligosaccharides with at least one terminal alpha-1,2-linked mannose epitope. Primarily recognizes the terminal disaccharide of the glycan. Also recognizes a subset of fucosylated glycans and lipopolysaccharides. Plays a role in innate immunity through its ability to bind non-self sugars presented by microorganisms and to activate the complement through the recruitment of MAPS1. Also plays a role in apoptosis through its ability to bind in a calcium-independent manner the DNA present at the surface of apoptotic cells and to activate the complement in response to this binding. Finally, plays a role in development, probably serving as a guidance cue during the migration of neural crest cells and other cell types during embryogenesis. The chain is Collectin-11 (colec11) from Danio rerio (Zebrafish).